A 494-amino-acid polypeptide reads, in one-letter code: Glutamyl-tRNA(Gln) amidotransferase subunit A (494 aa).

Active-site charge relay system residues include K81 and S156. Catalysis depends on S180, which acts as the Acyl-ester intermediate.

Belongs to the amidase family. GatA subfamily. Heterotrimer of A, B and C subunits.

It catalyses the reaction L-glutamyl-tRNA(Gln) + L-glutamine + ATP + H2O = L-glutaminyl-tRNA(Gln) + L-glutamate + ADP + phosphate + H(+). In terms of biological role, allows the formation of correctly charged Gln-tRNA(Gln) through the transamidation of misacylated Glu-tRNA(Gln) in organisms which lack glutaminyl-tRNA synthetase. The reaction takes place in the presence of glutamine and ATP through an activated gamma-phospho-Glu-tRNA(Gln). The sequence is that of Glutamyl-tRNA(Gln) amidotransferase subunit A from Mycobacterium tuberculosis (strain ATCC 25177 / H37Ra).